Here is a 108-residue protein sequence, read N- to C-terminus: Thiosulfate sulfurtransferase GlpE (108 aa).

One can recognise a Rhodanese domain in the interval 17–105; the sequence is HQGAAVLVDI…WHRRFPADVA (89 aa). Catalysis depends on C65, which acts as the Cysteine persulfide intermediate.

This sequence belongs to the GlpE family.

Its subcellular location is the cytoplasm. The catalysed reaction is thiosulfate + hydrogen cyanide = thiocyanate + sulfite + 2 H(+). It carries out the reaction thiosulfate + [thioredoxin]-dithiol = [thioredoxin]-disulfide + hydrogen sulfide + sulfite + 2 H(+). Functionally, transferase that catalyzes the transfer of sulfur from thiosulfate to thiophilic acceptors such as cyanide or dithiols. May function in a CysM-independent thiosulfate assimilation pathway by catalyzing the conversion of thiosulfate to sulfite, which can then be used for L-cysteine biosynthesis. This chain is Thiosulfate sulfurtransferase GlpE, found in Salmonella choleraesuis (strain SC-B67).